A 141-amino-acid chain; its full sequence is Ribosomal RNA large subunit methyltransferase H (141 aa).

Glycine 88 contributes to the S-adenosyl-L-methionine binding site.

Belongs to the RNA methyltransferase RlmH family. Homodimer.

Its subcellular location is the cytoplasm. It carries out the reaction pseudouridine(1915) in 23S rRNA + S-adenosyl-L-methionine = N(3)-methylpseudouridine(1915) in 23S rRNA + S-adenosyl-L-homocysteine + H(+). In terms of biological role, specifically methylates the pseudouridine at position 1915 (m3Psi1915) in 23S rRNA. The sequence is that of Ribosomal RNA large subunit methyltransferase H from Novosphingobium aromaticivorans (strain ATCC 700278 / DSM 12444 / CCUG 56034 / CIP 105152 / NBRC 16084 / F199).